A 286-amino-acid chain; its full sequence is 3-methyl-2-oxobutanoate hydroxymethyltransferase (286 aa).

Residues D51 and D90 each coordinate Mg(2+). Residues 51-52, D90, and K120 each bind 3-methyl-2-oxobutanoate; that span reads DS. E122 serves as a coordination point for Mg(2+). Residue E189 is the Proton acceptor of the active site. The disordered stretch occupies residues 263 to 286; the sequence is TFPGPSHVFSGSKASSDLNGGDES.

Belongs to the PanB family. Homodecamer; pentamer of dimers. It depends on Mg(2+) as a cofactor.

The protein resides in the cytoplasm. The enzyme catalyses 3-methyl-2-oxobutanoate + (6R)-5,10-methylene-5,6,7,8-tetrahydrofolate + H2O = 2-dehydropantoate + (6S)-5,6,7,8-tetrahydrofolate. It participates in cofactor biosynthesis; (R)-pantothenate biosynthesis; (R)-pantoate from 3-methyl-2-oxobutanoate: step 1/2. In terms of biological role, catalyzes the reversible reaction in which hydroxymethyl group from 5,10-methylenetetrahydrofolate is transferred onto alpha-ketoisovalerate to form ketopantoate. The polypeptide is 3-methyl-2-oxobutanoate hydroxymethyltransferase (Mesorhizobium japonicum (strain LMG 29417 / CECT 9101 / MAFF 303099) (Mesorhizobium loti (strain MAFF 303099))).